We begin with the raw amino-acid sequence, 391 residues long: Formate-dependent phosphoribosylglycinamide formyltransferase (391 aa).

Residues 20–21 and glutamate 80 each bind N(1)-(5-phospho-beta-D-ribosyl)glycinamide; that span reads EL. ATP-binding positions include arginine 112, lysine 153, 158-163, 193-196, and glutamate 201; these read SSGKGQ and EGFI. An ATP-grasp domain is found at 117–306; the sequence is RLAAEELGLT…EFALHVRAFT (190 aa). Positions 265 and 277 each coordinate Mg(2+). N(1)-(5-phospho-beta-D-ribosyl)glycinamide-binding positions include aspartate 284, lysine 354, and 361 to 362; that span reads RR.

This sequence belongs to the PurK/PurT family. As to quaternary structure, homodimer.

It catalyses the reaction N(1)-(5-phospho-beta-D-ribosyl)glycinamide + formate + ATP = N(2)-formyl-N(1)-(5-phospho-beta-D-ribosyl)glycinamide + ADP + phosphate + H(+). Its pathway is purine metabolism; IMP biosynthesis via de novo pathway; N(2)-formyl-N(1)-(5-phospho-D-ribosyl)glycinamide from N(1)-(5-phospho-D-ribosyl)glycinamide (formate route): step 1/1. Functionally, involved in the de novo purine biosynthesis. Catalyzes the transfer of formate to 5-phospho-ribosyl-glycinamide (GAR), producing 5-phospho-ribosyl-N-formylglycinamide (FGAR). Formate is provided by PurU via hydrolysis of 10-formyl-tetrahydrofolate. This chain is Formate-dependent phosphoribosylglycinamide formyltransferase, found in Vibrio vulnificus (strain CMCP6).